The chain runs to 401 residues: Inositol phosphorylceramide synthase catalytic subunit AUR1 (401 aa).

Topologically, residues 1-41 are cytoplasmic; sequence MANPFSRWFLSERPPNCHVADLETSLDPHQTLLKVQKYKPA. The helical transmembrane segment at 42–62 threads the bilayer; that stretch reads LSDWVHYIFLGSIMLFVFITN. At 63–64 the chain is on the lumenal side; that stretch reads PA. Residues 65-85 form a helical membrane-spanning segment; it reads PWIFKILFYCFLGTLFIIPAT. Topologically, residues 86–87 are cytoplasmic; the sequence is SQ. Residues 88 to 108 form a helical membrane-spanning segment; the sequence is FFFNALPILTWVALYFTSSYF. Topologically, residues 109–155 are lumenal; sequence PDDRRPPITVKVLPAVETILYGDNLSDILATSTNSFLDILAWLPYGL. A glycan (N-linked (GlcNAc...) asparagine) is linked at N132. Residues 156–176 traverse the membrane as a helical segment; that stretch reads FHFGAPFVVAAILFVFGPPTV. Over 177–178 the chain is Cytoplasmic; the sequence is LQ. Residues 179-199 form a helical membrane-spanning segment; that stretch reads GYAFAFGYMNLFGVIMQNVFP. The Lumenal segment spans residues 200 to 245; it reads AAPPWYKILYGLQSANYDMHGSPGGLARIDKLLGINMYTTAFSNSS. The chain crosses the membrane as a helical span at residues 246 to 266; it reads VIFGAFPSLHSGCATMEALFF. Topologically, residues 267-268 are cytoplasmic; it reads CY. Residues 269-289 form a helical membrane-spanning segment; that stretch reads CFPKLKPLFIAYVCWLWWSTM. Residues 290-291 are Lumenal-facing; that stretch reads YL. A helical transmembrane segment spans residues 292-312; that stretch reads THHYFVDLMAGSVLSYVIFQY. Residues 313–401 are Cytoplasmic-facing; that stretch reads TKYTHLPIVD…SITSLGVKRA (89 aa). The segment at 374–401 is disordered; that stretch reads VSPSLFDGSTSVSRSSATSITSLGVKRA. Over residues 382–395 the composition is skewed to low complexity; that stretch reads STSVSRSSATSITS. Phosphoserine occurs at positions 392 and 395.

Belongs to the AUR1 family. As to quaternary structure, component of the inositol phosphorylceramide synthase complex composed of at least AUR1 and KEI1.

It is found in the golgi apparatus. It localises to the golgi stack membrane. It carries out the reaction an N-(2R-hydroxy-very-long-chain fatty acyl)-(R)-4-hydroxysphingoid base + a 1,2-diacyl-sn-glycero-3-phospho-(1D-myo-inositol) = a 1D-myo-inositol-1-phospho-N-[(R)-2-hydroxy-very-long-chain fatty acyl]-(R)-4-hydroxysphingoid base + a 1,2-diacyl-sn-glycerol. Its activity is regulated as follows. Inhibited by aureobasidin A (AbA), khafrefungin and rustmicin. Catalytic component of the inositol phosphorylceramide synthase which catalyzes the addition of a phosphorylinositol group onto ceramide to form inositol phosphorylceramide, an essential step in sphingolipid biosynthesis. This Saccharomyces cerevisiae (strain ATCC 204508 / S288c) (Baker's yeast) protein is Inositol phosphorylceramide synthase catalytic subunit AUR1.